A 362-amino-acid polypeptide reads, in one-letter code: Meiotic recombination protein SPO11-1 (362 aa).

The Topo IIA-type catalytic domain occupies 8–142 (SESTNLLQRI…LNVVSVGNGL (135 aa)). Tyrosine 103 (O-(5'-phospho-DNA)-tyrosine intermediate) is an active-site residue. Mg(2+) contacts are provided by glutamate 189 and aspartate 241.

The protein belongs to the TOP6A family. In terms of assembly, heterotetramer of 2 SPO11 (SPO11-1 and/or SPO11-2) and 2 MTOPVIB chains. Interacts with MTOPVIB. May form a heterodimer with SPO11-2. Interacts with PRD1. Does not interact with TOP6B. Requires Mg(2+) as cofactor. In terms of tissue distribution, expressed in shoots, young seedlings, flowers and reproductive tissues. Not found in roots or rosette leaves.

It localises to the nucleus. The catalysed reaction is ATP-dependent breakage, passage and rejoining of double-stranded DNA.. Component of a topoisomerase 6 complex specifically required for meiotic recombination. Together with MTOPVIB, mediates DNA cleavage that forms the double-strand breaks (DSB) that initiate meiotic recombination. The complex promotes relaxation of negative and positive supercoiled DNA and DNA decatenation through cleavage and ligation cycles. This chain is Meiotic recombination protein SPO11-1, found in Arabidopsis thaliana (Mouse-ear cress).